We begin with the raw amino-acid sequence, 107 residues long: Theromyzin (107 aa).

An N-terminal signal peptide occupies residues M1–A21.

In terms of tissue distribution, coelomic liquid (at protein level). Expressed in large fat cells in contact with coelomic cavities, in intestinal epithelia and at the epidermis level.

It localises to the secreted. In terms of biological role, has bacteriostatic activity against M.luteus. No activity toward E.coli and F.oxysporum. This chain is Theromyzin, found in Theromyzon tessulatum (Duck leech).